Here is a 207-residue protein sequence, read N- to C-terminus: ATP synthase subunit b (207 aa).

Residues 1–27 (MKLRATFVFKTTLVALSFALFALFLVS) form the signal peptide. Cys-28 carries N-palmitoyl cysteine lipidation. Residue Cys-28 is the site of S-diacylglycerol cysteine attachment. Residues 49 to 69 (WVFLAHLLAFVILLFLLLFLF) form a helical membrane-spanning segment.

The protein belongs to the ATPase B chain family. As to quaternary structure, F-type ATPases have 2 components, F(1) - the catalytic core - and F(0) - the membrane proton channel. F(1) has five subunits: alpha(3), beta(3), gamma(1), delta(1), epsilon(1). F(0) has three main subunits: a(1), b(2) and c(10-14). The alpha and beta chains form an alternating ring which encloses part of the gamma chain. F(1) is attached to F(0) by a central stalk formed by the gamma and epsilon chains, while a peripheral stalk is formed by the delta and b chains.

It is found in the cell membrane. Functionally, f(1)F(0) ATP synthase produces ATP from ADP in the presence of a proton or sodium gradient. F-type ATPases consist of two structural domains, F(1) containing the extramembraneous catalytic core and F(0) containing the membrane proton channel, linked together by a central stalk and a peripheral stalk. During catalysis, ATP synthesis in the catalytic domain of F(1) is coupled via a rotary mechanism of the central stalk subunits to proton translocation. In terms of biological role, component of the F(0) channel, it forms part of the peripheral stalk, linking F(1) to F(0). This chain is ATP synthase subunit b, found in Mycoplasma pneumoniae (strain ATCC 29342 / M129 / Subtype 1) (Mycoplasmoides pneumoniae).